The following is a 265-amino-acid chain: MNERSAPIGVMDSGVGGLSVLAEIQRLLPNETLLYVADSGHVPYGEKSPDYIRQRLRHIAGFLREQGAKAMVLACNTATVATVADLRALYPDWPLVGMEPAVKPAAAATRSGVVGVLATTGTLQSAKFAALLDRFASDVRVITQPCPGLVECIEAGDLTSPALRQLLAGYVQPLLAQGCDTLILGCTHYPFLRPMLADMVPADVAIIDTGAAVARQLQRLLGERDLLADGPARETAFWTSADPDSLKKILPMLWMQSDRVQSFPL.

Substrate contacts are provided by residues 12–13 and 44–45; these read DS and YG. Cys-75 acts as the Proton donor/acceptor in catalysis. 76 to 77 is a binding site for substrate; the sequence is NT. Cys-186 acts as the Proton donor/acceptor in catalysis. Position 187-188 (187-188) interacts with substrate; that stretch reads TH.

This sequence belongs to the aspartate/glutamate racemases family.

It carries out the reaction L-glutamate = D-glutamate. The protein operates within cell wall biogenesis; peptidoglycan biosynthesis. Its function is as follows. Provides the (R)-glutamate required for cell wall biosynthesis. The sequence is that of Glutamate racemase from Pseudomonas entomophila (strain L48).